A 109-amino-acid chain; its full sequence is Somatostatin-2 (109 aa).

The signal sequence occupies residues 1–16; sequence MQFLASLVSFLLVVWS. Residues 17 to 80 constitute a propeptide that is removed on maturation; that stretch reads VKATALPVED…EPLENKLEER (64 aa). Cys98 and Cys109 are disulfide-bonded.

It belongs to the somatostatin family.

It localises to the secreted. In terms of biological role, somatostatin inhibits the release of somatotropin. This Protopterus annectens (African lungfish) protein is Somatostatin-2 (sst2).